Here is a 256-residue protein sequence, read N- to C-terminus: Probable hydroxyacylglutathione hydrolase glo2 (256 aa).

Zn(2+) is bound by residues H63, H65, D67, H68, H118, and D139. Residues R148, H178 to Y180, and R250 to K253 each bind substrate. Residue H178 participates in Zn(2+) binding.

This sequence belongs to the metallo-beta-lactamase superfamily. Glyoxalase II family. Zn(2+) is required as a cofactor.

It localises to the cytoplasm. The protein resides in the nucleus. The enzyme catalyses an S-(2-hydroxyacyl)glutathione + H2O = a 2-hydroxy carboxylate + glutathione + H(+). It catalyses the reaction (R)-S-lactoylglutathione + H2O = (R)-lactate + glutathione + H(+). It participates in secondary metabolite metabolism; methylglyoxal degradation; (R)-lactate from methylglyoxal: step 2/2. In terms of biological role, thiolesterase that catalyzes the hydrolysis of S-D-lactoylglutathione to form glutathione and D-lactic acid. Involved in the metabolism of methylglyoxal, a toxic compound for yeast proliferation, by converting methylglyoxal to lactate via S-D-lactoylglutathione by sequential enzyme reactions catalyzed by glyoxalase I and glyoxalase II. This is Probable hydroxyacylglutathione hydrolase glo2 (glo2) from Schizosaccharomyces pombe (strain 972 / ATCC 24843) (Fission yeast).